The following is a 217-amino-acid chain: Cytidylate kinase (217 aa).

Position 9 to 17 (Gly-9 to Ser-17) interacts with ATP.

Belongs to the cytidylate kinase family. Type 1 subfamily.

It localises to the cytoplasm. The enzyme catalyses CMP + ATP = CDP + ADP. It catalyses the reaction dCMP + ATP = dCDP + ADP. The polypeptide is Cytidylate kinase (Mycoplasma pneumoniae (strain ATCC 29342 / M129 / Subtype 1) (Mycoplasmoides pneumoniae)).